The primary structure comprises 352 residues: N-acetyl-gamma-glutamyl-phosphate reductase (352 aa).

Cysteine 149 is an active-site residue.

The protein belongs to the NAGSA dehydrogenase family. Type 1 subfamily.

It localises to the cytoplasm. The catalysed reaction is N-acetyl-L-glutamate 5-semialdehyde + phosphate + NADP(+) = N-acetyl-L-glutamyl 5-phosphate + NADPH + H(+). It participates in amino-acid biosynthesis; L-arginine biosynthesis; N(2)-acetyl-L-ornithine from L-glutamate: step 3/4. Catalyzes the NADPH-dependent reduction of N-acetyl-5-glutamyl phosphate to yield N-acetyl-L-glutamate 5-semialdehyde. The polypeptide is N-acetyl-gamma-glutamyl-phosphate reductase (Polynucleobacter asymbioticus (strain DSM 18221 / CIP 109841 / QLW-P1DMWA-1) (Polynucleobacter necessarius subsp. asymbioticus)).